Here is a 310-residue protein sequence, read N- to C-terminus: ATP-dependent protease (310 aa).

The region spanning 24-186 (RLNQCFFKFK…TPNQKEENYF (163 aa)) is the Integrase catalytic domain.

This Lactococcus lactis subsp. lactis (Streptococcus lactis) protein is ATP-dependent protease.